Here is a 316-residue protein sequence, read N- to C-terminus: Neutrophil-stimulating factor 1 (316 aa).

The N-terminal stretch at 1–21 (METSLPITVVFLIVLITGAQT) is a signal peptide. The involved in interaction with human CD47 stretch occupies residues 126–316 (HGEMLERMTA…WFAVSWNDRG (191 aa)). Residue N169 is glycosylated (N-linked (GlcNAc...) asparagine).

As to quaternary structure, interacts with human CD4. Interacts with human CD47; the interaction results in inhibition of phagocytosis activity of host macrophages. In terms of tissue distribution, female salivary gland (at protein level). Saliva (at protein level). Some expression in ovary and midgut (at protein level).

It is found in the secreted. In terms of biological role, activates host neutrophils; induces expression of IL1B and CXCL2 at the bite site. Promotes activation of human CD4(+) T-cells. Inhibits phagocytosis activity of host macrophages via the interaction with CD47 receptor on their surface. Suppresses expression of pro-inflammatory cytokines, such as IFN-gamma/IFNG, IL2, TNF-alpha/TNF, IL12B, IL8/CXCL8, IL6, in host white blood cells. Reduces host polymorphonuclear neutrophil chemotaxis induced by N-formylmethionine-leucylphenylalanine (fMLF). Reduces CD11b/ITGAM expression in fMLF-induced host polymorphonuclear neutrophils. Its function is as follows. (Microbial infection) Enhances early replication of Zika virus in the host. This Aedes aegypti (Yellowfever mosquito) protein is Neutrophil-stimulating factor 1.